Consider the following 466-residue polypeptide: MRAMSTNPPNLRPDLAPAARLGTAATRPGQPTIGMVSLGCPKALVDSERILTRLRAEGYGISPDYAGADAVIVNTCGFLDSAKAESLDAIGEALKENGKVIVTGCLGAEPDYIREHHPRILAVTGPHQYEQVLDAVHGAVPPDPDPFVDLLPASGVQLTPRHYSYLKISEGCNHKCKFCIIPDMRGKLASRPAHAVLREAEKLVDNGVKELLIISQDTSAYGLDRKYDTNLWKNREVRSHITDLARELGQLDAWVRLHYVYPYPHVRELIPLMADAGCNLLPYLDIPFQHAHPDTLKRMARPAAAARTLDEIAAWREICPEITLRSTFIVGYPGETEAEFQTLLDWMDEAQLDRVGCFQYENVAGARSNDLPDHVPAEVKQERWDRFMAKAQAISEAKLAARVGQVIEVIVDEVDDEAATCRTKSDAPEIDGNLFIDEGFEGLQPGDIVTVEVDEAGEYDLWGRLR.

Residues 31–141 enclose the MTTase N-terminal domain; it reads PTIGMVSLGC…VLDAVHGAVP (111 aa). Cysteine 40, cysteine 76, cysteine 105, cysteine 172, cysteine 176, and cysteine 179 together coordinate [4Fe-4S] cluster. Positions 158–397 constitute a Radical SAM core domain; sequence LTPRHYSYLK…MAKAQAISEA (240 aa). Residues 400–466 enclose the TRAM domain; sequence AARVGQVIEV…GEYDLWGRLR (67 aa).

Belongs to the methylthiotransferase family. RimO subfamily. [4Fe-4S] cluster serves as cofactor.

The protein resides in the cytoplasm. It carries out the reaction L-aspartate(89)-[ribosomal protein uS12]-hydrogen + (sulfur carrier)-SH + AH2 + 2 S-adenosyl-L-methionine = 3-methylsulfanyl-L-aspartate(89)-[ribosomal protein uS12]-hydrogen + (sulfur carrier)-H + 5'-deoxyadenosine + L-methionine + A + S-adenosyl-L-homocysteine + 2 H(+). In terms of biological role, catalyzes the methylthiolation of an aspartic acid residue of ribosomal protein uS12. This is Ribosomal protein uS12 methylthiotransferase RimO from Ruegeria pomeroyi (strain ATCC 700808 / DSM 15171 / DSS-3) (Silicibacter pomeroyi).